The following is a 669-amino-acid chain: Putative heme-binding protein rrnAC3100 (669 aa).

Position 181 (H181) interacts with heme. Disordered stretches follow at residues 260–351 (RVPT…PDVS) and 451–477 (LGGS…ESSQ). The 89-residue stretch at 579-667 (GTMGMFYTVK…VLADRPRHVF (89 aa)) folds into the ABM domain.

It in the N-terminal section; belongs to the ChdC family.

The protein is Putative heme-binding protein rrnAC3100 of Haloarcula marismortui (strain ATCC 43049 / DSM 3752 / JCM 8966 / VKM B-1809) (Halobacterium marismortui).